The chain runs to 172 residues: NAD(P)H-quinone oxidoreductase subunit I, chloroplastic (172 aa).

4Fe-4S ferredoxin-type domains are found at residues 55–84 (GRIH…VDWK) and 95–124 (LNYS…MTEE). 8 residues coordinate [4Fe-4S] cluster: cysteine 64, cysteine 67, cysteine 70, cysteine 74, cysteine 104, cysteine 107, cysteine 110, and cysteine 114.

The protein belongs to the complex I 23 kDa subunit family. In terms of assembly, NDH is composed of at least 16 different subunits, 5 of which are encoded in the nucleus. [4Fe-4S] cluster serves as cofactor.

It localises to the plastid. The protein localises to the chloroplast thylakoid membrane. The enzyme catalyses a plastoquinone + NADH + (n+1) H(+)(in) = a plastoquinol + NAD(+) + n H(+)(out). It catalyses the reaction a plastoquinone + NADPH + (n+1) H(+)(in) = a plastoquinol + NADP(+) + n H(+)(out). Its function is as follows. NDH shuttles electrons from NAD(P)H:plastoquinone, via FMN and iron-sulfur (Fe-S) centers, to quinones in the photosynthetic chain and possibly in a chloroplast respiratory chain. The immediate electron acceptor for the enzyme in this species is believed to be plastoquinone. Couples the redox reaction to proton translocation, and thus conserves the redox energy in a proton gradient. The polypeptide is NAD(P)H-quinone oxidoreductase subunit I, chloroplastic (Olimarabidopsis pumila (Dwarf rocket)).